The primary structure comprises 938 residues: Protein NLP3 (938 aa).

2 disordered regions span residues 1–26 (MEVD…GGGD) and 557–597 (LADD…KAEK). Gly residues predominate over residues 12–26 (AGEGGGGGIGGGGGD). Residues 580–597 (SLHKSNKPPERRRGKAEK) show a composition bias toward basic and acidic residues. Residues 585 to 666 (NKPPERRRGK…IESVQGSDAA (82 aa)) form the RWP-RK domain. The stretch at 640-662 (SRKINKVNRSLSKLKQVIESVQG) forms a coiled coil. The interval 743 to 769 (DKASHSRSSSGEGSINSRTSEASCHGS) is disordered. Residues 748-762 (SRSSSGEGSINSRTS) are compositionally biased toward low complexity. The region spanning 847 to 926 (TVTIKASFKE…HVIRLLVSDV (80 aa)) is the PB1 domain.

The protein localises to the nucleus. Probable transcription factor. The polypeptide is Protein NLP3 (NLP3) (Oryza sativa subsp. japonica (Rice)).